A 264-amino-acid polypeptide reads, in one-letter code: Indole-3-glycerol phosphate synthase (264 aa).

Belongs to the TrpC family.

It carries out the reaction 1-(2-carboxyphenylamino)-1-deoxy-D-ribulose 5-phosphate + H(+) = (1S,2R)-1-C-(indol-3-yl)glycerol 3-phosphate + CO2 + H2O. It participates in amino-acid biosynthesis; L-tryptophan biosynthesis; L-tryptophan from chorismate: step 4/5. The polypeptide is Indole-3-glycerol phosphate synthase (Stenotrophomonas maltophilia (strain R551-3)).